The following is a 260-amino-acid chain: MELDEVIITRAIFDEYSKTFLDYTEVDVALIGGGPANLVAARYLAEAGAKVAIYEQKLSLGGGMWAGGMMFPRIVVQEEACRILDDFGIRYKEYQPGYYVANSVESVGKLISGATSAGAEVFNLVSFEDVMIRENDRVTGIVVNWGPVTVQRLHVDPLMIRTKLVIDGTGHEAVVCNTILRKIPNAKIGNLGKLGEKPMWSEVGEQLVVDATKEIYPGLIVAGMAANAATCSPRMGPVFGGMLLSGEKAAKLALEKLKEL.

NAD(+) is bound by residues Ala-36, 55–56, Gly-63, and 154–156; these read EQ and HVD. Positions 156 and 171 each coordinate Fe cation. NAD(+) is bound at residue Met-224. Residue Arg-234 coordinates glycine.

This sequence belongs to the THI4 family. Homooctamer; tetramer of dimers. Fe(2+) serves as cofactor.

It catalyses the reaction hydrogen sulfide + glycine + NAD(+) = ADP-5-ethyl-4-methylthiazole-2-carboxylate + nicotinamide + 3 H2O + H(+). The protein operates within cofactor biosynthesis; thiamine diphosphate biosynthesis. Functionally, involved in the biosynthesis of the thiazole moiety of thiamine. Catalyzes the conversion of NAD and glycine to adenosine diphosphate 5-(2-hydroxyethyl)-4-methylthiazole-2-carboxylate (ADT), an adenylated thiazole intermediate, using free sulfide as a source of sulfur. This Methanosarcina barkeri (strain Fusaro / DSM 804) protein is Thiamine thiazole synthase.